Consider the following 633-residue polypeptide: tRNA uridine 5-carboxymethylaminomethyl modification enzyme MnmG (633 aa).

FAD is bound by residues 15-20, isoleucine 127, and serine 182; that span reads GAGHAG. 276 to 290 is a binding site for NAD(+); that stretch reads GPRYCPSIEDKIVRF. Glutamine 373 contacts FAD.

This sequence belongs to the MnmG family. In terms of assembly, homodimer. Heterotetramer of two MnmE and two MnmG subunits. FAD serves as cofactor.

The protein resides in the cytoplasm. In terms of biological role, NAD-binding protein involved in the addition of a carboxymethylaminomethyl (cmnm) group at the wobble position (U34) of certain tRNAs, forming tRNA-cmnm(5)s(2)U34. The protein is tRNA uridine 5-carboxymethylaminomethyl modification enzyme MnmG of Streptococcus agalactiae serotype III (strain NEM316).